Here is a 95-residue protein sequence, read N- to C-terminus: Membrane protein insertion and folding monitor (95 aa).

Residues 12-32 (LFLVDFFTIILPALTAIGIAF) form a helical membrane-spanning segment. The crucial for elongation arrest stretch occupies residues 86 to 89 (DEED).

It localises to the cell membrane. Functionally, sensor protein that up-regulates translation of the secondary membrane protein insertase (MisCB/YqjG) when activity of the primary membrane protein insertase (MisCA/SpoIIIJ) is limited. Acts as a ribosome-nascent chain complex. When the primary membrane protein insertase activity or level is reduced, the membrane insertion of MifM is impaired, which induces arrest of MifM translation and unfolding of the mRNA hairpin. Unfolding leads to translation of the downstream gene, which encodes the secondary membrane protein insertase MisCB/YqjG. Translation arrest of MifM is mediated by interaction of its C-terminal domain with the ribosomal polypeptide exit tunnel. Undergoes multisite stalling, which may allow a sufficient duration of ribosomal stalling and consequently sufficient levels of MisCB/YqjG. The chain is Membrane protein insertion and folding monitor (mifM) from Bacillus subtilis (strain 168).